The primary structure comprises 130 residues: Holo-[acyl-carrier-protein] synthase (130 aa).

2 residues coordinate Mg(2+): Asp8 and Glu62.

Belongs to the P-Pant transferase superfamily. AcpS family. Mg(2+) serves as cofactor.

It is found in the cytoplasm. It catalyses the reaction apo-[ACP] + CoA = holo-[ACP] + adenosine 3',5'-bisphosphate + H(+). In terms of biological role, transfers the 4'-phosphopantetheine moiety from coenzyme A to a Ser of acyl-carrier-protein. This Acidovorax ebreus (strain TPSY) (Diaphorobacter sp. (strain TPSY)) protein is Holo-[acyl-carrier-protein] synthase.